Consider the following 502-residue polypeptide: Lysine--tRNA ligase (502 aa).

Positions 398 and 405 each coordinate Mg(2+).

Belongs to the class-II aminoacyl-tRNA synthetase family. In terms of assembly, homodimer. It depends on Mg(2+) as a cofactor.

It is found in the cytoplasm. It catalyses the reaction tRNA(Lys) + L-lysine + ATP = L-lysyl-tRNA(Lys) + AMP + diphosphate. The protein is Lysine--tRNA ligase of Thermosipho melanesiensis (strain DSM 12029 / CIP 104789 / BI429).